A 355-amino-acid polypeptide reads, in one-letter code: Uroporphyrinogen decarboxylase (355 aa).

Residues 27–31 (RQAGR), Asp-77, Tyr-154, Thr-209, and His-327 each bind substrate.

It belongs to the uroporphyrinogen decarboxylase family. Homodimer.

It localises to the cytoplasm. The catalysed reaction is uroporphyrinogen III + 4 H(+) = coproporphyrinogen III + 4 CO2. It participates in porphyrin-containing compound metabolism; protoporphyrin-IX biosynthesis; coproporphyrinogen-III from 5-aminolevulinate: step 4/4. In terms of biological role, catalyzes the decarboxylation of four acetate groups of uroporphyrinogen-III to yield coproporphyrinogen-III. In Yersinia pseudotuberculosis serotype O:1b (strain IP 31758), this protein is Uroporphyrinogen decarboxylase.